The sequence spans 597 residues: Probable HECT-type ubiquitin ligase-interacting protein creD (597 aa).

Disordered regions lie at residues 375–398 (ELDP…GTLS) and 432–499 (LNIT…MATP). The span at 443-455 (TDHESQNDSEHRR) shows a compositional bias: basic and acidic residues. The span at 465–481 (PSSGSNSHSPSSPVLSR) shows a compositional bias: low complexity. A compositionally biased stretch (basic and acidic residues) spans 482–492 (RPSDEVDHEHV).

The protein belongs to the arrestin family. Interacts with hulA.

Component of the regulatory network controlling carbon source utilization through ubiquitination and deubiquitination involving creA, creB, creC, creD and acrB. May be involved in signaling by recognizing appropriately phosphorylated substrates via its arrestin domains and then recruit a HECT-type ubiquitin ligase such as hulA, leading to ubiquitination of the substrate, providing a link between ubiquitination and phosphorylation in protein regulation and stability. The protein is Probable HECT-type ubiquitin ligase-interacting protein creD (creD) of Aspergillus oryzae (strain ATCC 42149 / RIB 40) (Yellow koji mold).